Here is a 1030-residue protein sequence, read N- to C-terminus: Semaphorin-6A (1030 aa).

A signal peptide spans 1 to 18 (MRSEALLLYFTLLHFAGA). At 19–649 (GFPEDSEPIS…KGHDQLVPVT (631 aa)) the chain is on the extracellular side. The Sema domain maps to 24–512 (SEPISISHGN…FSTCVIKVPL (489 aa)). N-linked (GlcNAc...) asparagine glycosylation is found at Asn33, Asn49, and Asn65. 4 disulfide bridges follow: Cys107-Cys117, Cys135-Cys144, Cys258-Cys369, and Cys283-Cys328. Residue Asn282 is glycosylated (N-linked (GlcNAc...) asparagine). N-linked (GlcNAc...) asparagine glycosylation is found at Asn434 and Asn461. 4 disulfide bridges follow: Cys477-Cys506, Cys515-Cys533, Cys521-Cys568, and Cys525-Cys542. Residues 650 to 670 (LLAIAVILAFVMGAVFSGITV) traverse the membrane as a helical segment. The Cytoplasmic portion of the chain corresponds to 671–1030 (YCVCDHRRKD…TSMKPNDACT (360 aa)). Ser698 is modified (phosphoserine). Disordered stretches follow at residues 754-778 (ALPT…REWE), 860-897 (SSKS…SLSQ), and 912-1030 (YGVD…DACT). Residues 920 to 936 (YPTNSLTRSHQATTLKR) are compositionally biased toward polar residues. Positions 937–952 (NNTNSSNSSHLSRNQS) are enriched in low complexity. Phosphoserine is present on Ser952. 2 stretches are compositionally biased toward polar residues: residues 970–997 (QVHS…SLTR) and 1018–1030 (PLST…DACT).

It belongs to the semaphorin family. Active as a homodimer or oligomer. The SEMA6A homodimer interacts with a PLXNA2 homodimer, giving rise to a heterotetramer. Interacts with EVL. As to quaternary structure, (Microbial infection) Interacts with P.sordellii toxin TcsL; semaphorins SEMA6A and SEMA6B constitute the major host receptors for TcsL in the vascular endothelium.

It localises to the cell membrane. Cell surface receptor for PLXNA2 that plays an important role in cell-cell signaling. Required for normal granule cell migration in the developing cerebellum. Promotes reorganization of the actin cytoskeleton and plays an important role in axon guidance in the developing central nervous system. Can act as repulsive axon guidance cue. Has repulsive action towards migrating granular neurons. May play a role in channeling sympathetic axons into the sympathetic chains and controlling the temporal sequence of sympathetic target innervation. Functionally, (Microbial infection) Acts as a receptor for P.sordellii toxin TcsL in the in the vascular endothelium. In Homo sapiens (Human), this protein is Semaphorin-6A (SEMA6A).